A 55-amino-acid polypeptide reads, in one-letter code: Large ribosomal subunit protein bL33 (55 aa).

This sequence belongs to the bacterial ribosomal protein bL33 family.

In Aliivibrio fischeri (strain ATCC 700601 / ES114) (Vibrio fischeri), this protein is Large ribosomal subunit protein bL33.